The primary structure comprises 503 residues: Probable cytosol aminopeptidase (503 aa).

Residues K270 and D275 each contribute to the Mn(2+) site. K282 is an active-site residue. Mn(2+) is bound by residues D293, D352, and E354. The active site involves R356.

The protein belongs to the peptidase M17 family. The cofactor is Mn(2+).

The protein localises to the cytoplasm. It catalyses the reaction Release of an N-terminal amino acid, Xaa-|-Yaa-, in which Xaa is preferably Leu, but may be other amino acids including Pro although not Arg or Lys, and Yaa may be Pro. Amino acid amides and methyl esters are also readily hydrolyzed, but rates on arylamides are exceedingly low.. It carries out the reaction Release of an N-terminal amino acid, preferentially leucine, but not glutamic or aspartic acids.. In terms of biological role, presumably involved in the processing and regular turnover of intracellular proteins. Catalyzes the removal of unsubstituted N-terminal amino acids from various peptides. This Salmonella typhi protein is Probable cytosol aminopeptidase.